We begin with the raw amino-acid sequence, 229 residues long: Mannose-specific lectin TAR1 (229 aa).

The first 23 residues, methionine 1 to alanine 23, serve as a signal peptide directing secretion. 2 Bulb-type lectin domains span residues threonine 26–proline 131 and aspartate 145–leucine 229. Residues glutamine 51–asparagine 55, tyrosine 59, tryptophan 63, glutamine 64, glutamine 170–asparagine 174, tyrosine 178, and tyrosine 182–glutamine 185 contribute to the beta-D-mannose site. Positions glutamine 51–tyrosine 59 match the Carbohydrate-binding motif 1 motif. 2 disulfide bridges follow: cysteine 54/cysteine 74 and cysteine 173/cysteine 195. Residues glutamine 170–tyrosine 178 carry the Carbohydrate-binding motif 2 motif.

In terms of assembly, forms heterotetramer of 2 chains 1 and 2 chains 2 arranged as a dimer of chain 1 and chain 2 heterodimers.

The protein localises to the secreted. In terms of biological role, mannose-specific lectin. Shows agglutinating activity towards erythrocytes from rabbit. This is Mannose-specific lectin TAR1 from Colocasia esculenta (Wild taro).